The chain runs to 291 residues: Acetyl-coenzyme A carboxylase carboxyl transferase subunit beta (291 aa).

The segment at 1-23 (MSWLSKLMPSGIRTDNTPSKKRS) is disordered. The CoA carboxyltransferase N-terminal domain maps to 28–291 (LWEKCSNCGS…LGRQPAPEVA (264 aa)). 4 residues coordinate Zn(2+): C32, C35, C51, and C54. Residues 32–54 (CSNCGSALYRPELEENLEVCPKC) form a C4-type zinc finger.

Belongs to the AccD/PCCB family. Acetyl-CoA carboxylase is a heterohexamer composed of biotin carboxyl carrier protein (AccB), biotin carboxylase (AccC) and two subunits each of ACCase subunit alpha (AccA) and ACCase subunit beta (AccD). Zn(2+) is required as a cofactor.

It is found in the cytoplasm. It catalyses the reaction N(6)-carboxybiotinyl-L-lysyl-[protein] + acetyl-CoA = N(6)-biotinyl-L-lysyl-[protein] + malonyl-CoA. The protein operates within lipid metabolism; malonyl-CoA biosynthesis; malonyl-CoA from acetyl-CoA: step 1/1. Its function is as follows. Component of the acetyl coenzyme A carboxylase (ACC) complex. Biotin carboxylase (BC) catalyzes the carboxylation of biotin on its carrier protein (BCCP) and then the CO(2) group is transferred by the transcarboxylase to acetyl-CoA to form malonyl-CoA. This is Acetyl-coenzyme A carboxylase carboxyl transferase subunit beta from Stenotrophomonas maltophilia (strain K279a).